The following is a 246-amino-acid chain: Carboxy-S-adenosyl-L-methionine synthase (246 aa).

S-adenosyl-L-methionine-binding positions include Tyr39, 64–66, 89–90, 117–118, Asn132, and Arg199; these read GCS, DN, and DI.

Belongs to the class I-like SAM-binding methyltransferase superfamily. Cx-SAM synthase family. Homodimer.

The catalysed reaction is prephenate + S-adenosyl-L-methionine = carboxy-S-adenosyl-L-methionine + 3-phenylpyruvate + H2O. In terms of biological role, catalyzes the conversion of S-adenosyl-L-methionine (SAM) to carboxy-S-adenosyl-L-methionine (Cx-SAM). The chain is Carboxy-S-adenosyl-L-methionine synthase from Enterobacter sp. (strain 638).